A 142-amino-acid polypeptide reads, in one-letter code: MAKKVQAYVKLQVAAGMANPSPPVGPALGQQGVNIMEFCKIFNLQTENFEKGLPIPVIITVYSDRSFTFIIKTPPAAVLLSKAAGIKSGANQPKKEQVGKVTYSQIREIAEKKVADMNSNNIEAISRSILGTALSMGLIVEG.

It belongs to the universal ribosomal protein uL11 family. Part of the ribosomal stalk of the 50S ribosomal subunit. Interacts with L10 and the large rRNA to form the base of the stalk. L10 forms an elongated spine to which L12 dimers bind in a sequential fashion forming a multimeric L10(L12)X complex. In terms of processing, one or more lysine residues are methylated.

In terms of biological role, forms part of the ribosomal stalk which helps the ribosome interact with GTP-bound translation factors. The protein is Large ribosomal subunit protein uL11 of Baumannia cicadellinicola subsp. Homalodisca coagulata.